A 353-amino-acid polypeptide reads, in one-letter code: Fe(3+) ions import ATP-binding protein FbpC 1 (353 aa).

Residues 9 to 239 (VVFRNICKQF…PASAFIADFM (231 aa)) enclose the ABC transporter domain. 41–48 (GPSGCGKT) lines the ATP pocket.

The protein belongs to the ABC transporter superfamily. Fe(3+) ion importer (TC 3.A.1.10) family. As to quaternary structure, the complex is composed of two ATP-binding proteins (FbpC), two transmembrane proteins (FbpB) and a solute-binding protein (FbpA).

The protein localises to the cell inner membrane. The enzyme catalyses Fe(3+)(out) + ATP + H2O = Fe(3+)(in) + ADP + phosphate + H(+). Part of the ABC transporter complex FbpABC involved in Fe(3+) ions import. Responsible for energy coupling to the transport system. This chain is Fe(3+) ions import ATP-binding protein FbpC 1, found in Rhizobium meliloti (strain 1021) (Ensifer meliloti).